Consider the following 144-residue polypeptide: Nucleoside diphosphate kinase (144 aa).

The ATP site is built by Lys-11, Phe-59, Arg-87, Thr-93, Arg-104, and Asn-114. The active-site Pros-phosphohistidine intermediate is the His-117.

It belongs to the NDK family. As to quaternary structure, homotetramer. Requires Mg(2+) as cofactor.

Its subcellular location is the cytoplasm. The catalysed reaction is a 2'-deoxyribonucleoside 5'-diphosphate + ATP = a 2'-deoxyribonucleoside 5'-triphosphate + ADP. It carries out the reaction a ribonucleoside 5'-diphosphate + ATP = a ribonucleoside 5'-triphosphate + ADP. In terms of biological role, major role in the synthesis of nucleoside triphosphates other than ATP. The ATP gamma phosphate is transferred to the NDP beta phosphate via a ping-pong mechanism, using a phosphorylated active-site intermediate. This is Nucleoside diphosphate kinase from Vibrio atlanticus (strain LGP32) (Vibrio splendidus (strain Mel32)).